We begin with the raw amino-acid sequence, 379 residues long: Heme chaperone HemW (379 aa).

In terms of domain architecture, Radical SAM core spans 1–233; it reads MKSAYIHIPF…MSKMEAHGIH (233 aa). Y5 serves as a coordination point for S-adenosyl-L-methionine. Positions 11, 15, and 18 each coordinate [4Fe-4S] cluster. S-adenosyl-L-methionine is bound by residues G60, 61-62, E94, Q121, R133, and D158; that span reads GT.

Belongs to the anaerobic coproporphyrinogen-III oxidase family. HemW subfamily. Requires [4Fe-4S] cluster as cofactor.

The protein localises to the cytoplasm. Functionally, probably acts as a heme chaperone, transferring heme to an unknown acceptor. Binds one molecule of heme per monomer, possibly covalently. Binds 1 [4Fe-4S] cluster. The cluster is coordinated with 3 cysteines and an exchangeable S-adenosyl-L-methionine. The protein is Heme chaperone HemW of Bacillus subtilis (strain 168).